A 185-amino-acid chain; its full sequence is Probable chorismate pyruvate-lyase 1 (185 aa).

Substrate is bound by residues Arg70, Leu108, and Glu166.

This sequence belongs to the UbiC family.

The protein resides in the cytoplasm. It carries out the reaction chorismate = 4-hydroxybenzoate + pyruvate. Its pathway is cofactor biosynthesis; ubiquinone biosynthesis. Functionally, removes the pyruvyl group from chorismate, with concomitant aromatization of the ring, to provide 4-hydroxybenzoate (4HB) for the ubiquinone pathway. This is Probable chorismate pyruvate-lyase 1 from Pseudomonas fluorescens (strain Pf0-1).